The chain runs to 796 residues: U-box domain-containing protein 51 (796 aa).

3 disordered regions span residues 163–195 (DMDT…SSHQ), 218–240 (TNIG…SLDV), and 270–292 (RSSQ…SSSQ). Positions 171–181 (ADDRSESRFSS) are enriched in basic and acidic residues. The segment covering 182–195 (DSHSGTVSSTSSHQ) has biased composition (low complexity). Residues 270–291 (RSSQMEEASSSSTYSDPTSSSS) show a composition bias toward low complexity. Positions 298–407 (ELEKLKIELR…QRLEDALEGG (110 aa)) form a coiled coil. In terms of domain architecture, Protein kinase spans 429–700 (FSDELKIGVG…DLGKEILPVL (272 aa)). ATP contacts are provided by residues 435–443 (IGVGGYGSV) and Lys456. The active-site Proton acceptor is Asp557. In terms of domain architecture, U-box spans 724–796 (NAPTHFYCPI…IKEWRSQLIK (73 aa)).

It belongs to the protein kinase superfamily. Ser/Thr protein kinase family.

It carries out the reaction L-seryl-[protein] + ATP = O-phospho-L-seryl-[protein] + ADP + H(+). The catalysed reaction is L-threonyl-[protein] + ATP = O-phospho-L-threonyl-[protein] + ADP + H(+). The enzyme catalyses S-ubiquitinyl-[E2 ubiquitin-conjugating enzyme]-L-cysteine + [acceptor protein]-L-lysine = [E2 ubiquitin-conjugating enzyme]-L-cysteine + N(6)-ubiquitinyl-[acceptor protein]-L-lysine.. The protein operates within protein modification; protein ubiquitination. Its function is as follows. Functions as an E3 ubiquitin ligase. This is U-box domain-containing protein 51 (PUB51) from Arabidopsis thaliana (Mouse-ear cress).